The primary structure comprises 84 residues: Venom protein SynTx (84 aa).

The signal sequence occupies residues Thr-1–Thr-19. 4 disulfides stabilise this stretch: Cys-22–Cys-43, Cys-36–Cys-61, Cys-65–Cys-76, and Cys-77–Cys-82.

The protein belongs to the three-finger toxin family. Short-chain subfamily. Aminergic toxin sub-subfamily. As to quaternary structure, homodimer; disulfide-linked. Expressed by the venom gland.

Its subcellular location is the secreted. Its function is as follows. This protein shows a synergetic toxic effect in that it enhances the toxicity of other toxins. The chain is Venom protein SynTx from Dendroaspis jamesoni jamesoni (Jameson's mamba).